A 180-amino-acid polypeptide reads, in one-letter code: Trafficking protein particle complex subunit 3 (180 aa).

Cys-68 is lipidated: S-palmitoyl cysteine.

Belongs to the TRAPP small subunits family. BET3 subfamily. Homodimer. Part of the multisubunit TRAPP (transport protein particle) complex.

Its subcellular location is the golgi apparatus. The protein resides in the cis-Golgi network. It is found in the endoplasmic reticulum. Its function is as follows. May play a role in vesicular transport from endoplasmic reticulum to Golgi. This Gallus gallus (Chicken) protein is Trafficking protein particle complex subunit 3 (TRAPPC3).